A 269-amino-acid chain; its full sequence is MATH domain and coiled-coil domain-containing protein At2g01790 (269 aa).

Residues 6 to 134 (AVKKLWVINN…NGEVDIVAEV (129 aa)) form the MATH domain. The stretch at 228–269 (KLDWLEKKLKETGKSRLQEIEEDLKDLKVKCADMDALLEFLR) forms a coiled coil.

The sequence is that of MATH domain and coiled-coil domain-containing protein At2g01790 from Arabidopsis thaliana (Mouse-ear cress).